A 1222-amino-acid chain; its full sequence is BOS complex subunit NOMO3 (1222 aa).

An N-terminal signal peptide occupies residues 1–31; it reads MLVGQGAGPLGPAVVTAAVVLLLSGVGPAHG. At 32-1155 the chain is on the extracellular side; sequence SEDIVVGCGG…NPTRKLPEQD (1124 aa). Asparagine 50, asparagine 218, and asparagine 618 each carry an N-linked (GlcNAc...) asparagine glycan. Residues 1156–1176 traverse the membrane as a helical segment; that stretch reads IAQGSYIALPLTLLVLLAGYN. Residues 1177–1222 are Cytoplasmic-facing; that stretch reads HDKLIPLLLQLTSRLQGVGALGQAASDNSGPEDAKRQAKKQKTRRT. The segment at 1198 to 1222 is disordered; sequence GQAASDNSGPEDAKRQAKKQKTRRT. Residues 1213 to 1222 are compositionally biased toward basic residues; the sequence is QAKKQKTRRT.

Component of the back of Sec61 (BOS) complex, composed of NCLN/Nicalin, NOMO (NOMO1, NOMO2 or NOMO3) and TMEM147. The BOS complex is part of the multi-pass translocon (MPT) complex, composed of three subcomplexes, the GEL complex (composed of RAB5IF/OPTI and TMCO1), the BOS complex (composed of NCLN/Nicalin, NOMO and TMEM147) and the PAT complex (composed of WDR83OS/Asterix and CCDC47). The MPT complex associates with the SEC61 complex. Due to the strong similarity between NOMO1, NOMO2 and NOMO3, similar interaction pattern probably occur for the three gene copies.

It is found in the endoplasmic reticulum membrane. Its function is as follows. Component of the multi-pass translocon (MPT) complex that mediates insertion of multi-pass membrane proteins into the lipid bilayer of membranes. The MPT complex takes over after the SEC61 complex: following membrane insertion of the first few transmembrane segments of proteins by the SEC61 complex, the MPT complex occludes the lateral gate of the SEC61 complex to promote insertion of subsequent transmembrane regions. This Homo sapiens (Human) protein is BOS complex subunit NOMO3 (NOMO3).